Consider the following 427-residue polypeptide: Inorganic pyrophosphatase 1 (427 aa).

The span at 36 to 52 (SSSSNTATTSTSSSNTS) shows a compositional bias: low complexity. Disordered regions lie at residues 36–63 (SSSS…TSRP) and 77–118 (SMDS…RSLH). Polar residues-rich tracts occupy residues 53–63 (QKWATSRTSRP) and 77–114 (SMDS…ANSE). D259, D264, and D296 together coordinate Mg(2+).

It belongs to the PPase family. Mg(2+) serves as cofactor. In terms of tissue distribution, expressed in coelomocytes, the intestine and in the nervous system including the nerve cords and sensory neurons.

The protein localises to the cytoplasm. The enzyme catalyses diphosphate + H2O = 2 phosphate + H(+). Functionally, catalyzes the hydrolysis of inorganic pyrophosphate (PPi) forming two phosphate ions. Plays a role in intestinal development and subsequent normal secretory, digestive and absorption functions. Required for larval development. This Caenorhabditis elegans protein is Inorganic pyrophosphatase 1.